A 492-amino-acid polypeptide reads, in one-letter code: Probable small intestine urate exporter (492 aa).

The segment at 1 to 20 (MSTGADLKAREGDIPSDNMT) is disordered. N-linked (GlcNAc...) asparagine glycosylation is found at Asn-18, Asn-44, Asn-53, Asn-63, Asn-72, and Asn-87. Transmembrane regions (helical) follow at residues 112-132 (LSYG…VFGA), 134-154 (YVVG…PLAA), 156-176 (AGVA…VMVL), 198-218 (IAAS…GLIC), 225-245 (YIFY…FPLV), 287-307 (LPLW…STVM), 327-347 (ILSA…GLLA), 363-383 (KLFT…LPWV), 393-413 (FLVL…INFL), 426-446 (LLQV…GFFI), and 456-476 (NVFF…LIFS).

It belongs to the major facilitator superfamily. Sodium/anion cotransporter family. As to expression, expressed in the small intestine (at protein level).

The protein resides in the apical cell membrane. It carries out the reaction 3 Na(+)(out) + phosphate(out) = 3 Na(+)(in) + phosphate(in). It catalyses the reaction urate(out) + n chloride(in) = urate(in) + n chloride(out). The enzyme catalyses L-thyroxine(out) = L-thyroxine(in). The catalysed reaction is 3,3',5-triiodo-L-thyronine(out) = 3,3',5-triiodo-L-thyronine(in). Its function is as follows. Acts as a membrane potential-dependent organic anion transporter, the transport requires a low concentration of chloride ions. Mediates chloride-dependent transport of urate. Mediates sodium-independent high affinity transport of thyroid hormones including L-thyroxine (T4) and 3,3',5-triiodo-L-thyronine (T3). Can actively transport inorganic phosphate into cells via Na(+) cotransport. The chain is Probable small intestine urate exporter (Slc17a4) from Mus musculus (Mouse).